A 313-amino-acid polypeptide reads, in one-letter code: Protein FixB (313 aa).

Residue 255–283 (LYLAVGISGQIQHMVGANGAQTIFAINKD) participates in FAD binding.

This sequence belongs to the ETF alpha-subunit/FixB family. In terms of assembly, heterodimer of FixA and FixB.

Its pathway is amine and polyamine metabolism; carnitine metabolism. Functionally, required for anaerobic carnitine reduction. May bring reductant to CaiA. In Salmonella agona (strain SL483), this protein is Protein FixB.